The chain runs to 655 residues: Potassium voltage-gated channel subfamily A member 4 (655 aa).

The Cytoplasmic portion of the chain corresponds to 1–306 (MEVAMVSAES…LLFEYPESSS (306 aa)). The tract at residues 24-153 (QARARERERL…SEEDHGDGCS (130 aa)) is disordered. The segment covering 36-50 (SRAAAAAAVAAATAA) has biased composition (low complexity). Residues 81-90 (GSREEEATRT) are compositionally biased toward basic and acidic residues. Basic residues predominate over residues 91 to 100 (EKKKKLHHRQ). Ser123 is subject to Phosphoserine. Acidic residues predominate over residues 123 to 138 (SEEEEDEEEEEEEEEE). A compositionally biased stretch (basic and acidic residues) spans 139-150 (GRFYYSEEDHGD). The helical transmembrane segment at 307–328 (PARGIAIVSVLVILISIVIFCL) threads the bilayer. Over 329–372 (ETLPEFRDDRDLIMALSAGGHSRLLNDTSAPHLENSGHTIFNDP) the chain is Extracellular. Asn354 carries an N-linked (GlcNAc...) asparagine glycan. A helical transmembrane segment spans residues 373-394 (FFIVETVCIVWFSFEFVVRCFA). The Cytoplasmic portion of the chain corresponds to 395–405 (CPSQALFFKNI). Residues 406–426 (MNIIDIVSILPYFITLGTDLA) form a helical membrane-spanning segment. Over 427–441 (QQQGGGNGQQQQAMS) the chain is Extracellular. A helical; Voltage-sensor transmembrane segment spans residues 442–462 (FAILRIIRLVRVFRIFKLSRH). Residues 463 to 477 (SKGLQILGHTLRASM) lie on the Cytoplasmic side of the membrane. The tract at residues 464–477 (KGLQILGHTLRASM) is S4-S5 linker. A helical membrane pass occupies residues 478–499 (RELGLLIFFLFIGVILFSSAVY). The Extracellular portion of the chain corresponds to 500-513 (FAEADEPTTHFQSI). Residues 514–525 (PDAFWWAVVTMT) constitute an intramembrane region (helical). The Selectivity filter motif lies at 526–531 (TVGYGD). The stretch at 526–533 (TVGYGDMK) is an intramembrane region. Residues 534–540 (PITVGGK) are Extracellular-facing. The helical transmembrane segment at 541–569 (IVGSLCAIAGVLTIALPVPVIVSNFNYFY) threads the bilayer. The Cytoplasmic segment spans residues 570-655 (HRETENEEQT…SNAKAVETDV (86 aa)). Phosphoserine; by PKA is present on Ser601. The span at 631-642 (CQGKGDDSETDK) shows a compositional bias: basic and acidic residues. The interval 631-655 (CQGKGDDSETDKNNCSNAKAVETDV) is disordered. Positions 653–655 (TDV) match the PDZ-binding motif.

This sequence belongs to the potassium channel family. A (Shaker) (TC 1.A.1.2) subfamily. Kv1.4/KCNA4 sub-subfamily. In terms of assembly, homotetramer and heterotetramer of potassium channel proteins. Interacts with KCNAB1 and KCNAB2. Interacts with DLG1, DLG2 and DLG4 via their PDZ domains. Interacts with SIGMAR1. Part of a complex containing KCNA1, KCNAB1 and LGI1. Detected in a complex with KCNA1. Interacts with KCNA2. Interacts (via cytoplasmic N-terminal domain) with KCNRG. N-glycosylated. In terms of tissue distribution, detected in brain (at protein level). Heart and brain.

It is found in the cell membrane. The protein resides in the cell projection. Its subcellular location is the axon. The enzyme catalyses K(+)(in) = K(+)(out). In terms of biological role, voltage-gated potassium channel that mediates transmembrane potassium transport in excitable membranes. Forms tetrameric potassium-selective channels through which potassium ions pass in accordance with their electrochemical gradient. The channel alternates between opened and closed conformations in response to the voltage difference across the membrane. Can form functional homotetrameric channels and heterotetrameric channels that contain variable proportions of KCNA1, KCNA2, KCNA4, KCNA5, and possibly other family members as well; channel properties depend on the type of alpha subunits that are part of the channel. Channel properties are modulated by cytoplasmic beta subunits that regulate the subcellular location of the alpha subunits and promote rapid inactivation. In vivo, membranes probably contain a mixture of heteromeric potassium channel complexes, making it difficult to assign currents observed in intact tissues to any particular potassium channel family member. Homotetrameric KCNA4 forms a potassium channel that opens in response to membrane depolarization, followed by rapid spontaneous channel closure. Likewise, a heterotetrameric channel formed by KCNA1 and KCNA4 shows rapid inactivation. This is Potassium voltage-gated channel subfamily A member 4 (Kcna4) from Rattus norvegicus (Rat).